A 216-amino-acid chain; its full sequence is MSNTRLPAPSFRATDFQAAFGVSRETLDRLAAYEALLRKWNPAINLVARSTLDDVWERHFADSAQLFALLPEGTRVLVDLGSGAGFPGLVLAILGVPEVHLIESDGRKAAFLREVARVTGAPATVHAQRAEQAEAPPADAVSARALADLSALLPLAARFLRPGGICLFPKGRTAADELTRARDSWTMRVEEFPSRTDPSGALLRLSEIAPRGMQIG.

Residues Gly-81, Phe-86, 130 to 131 (AE), and Arg-144 contribute to the S-adenosyl-L-methionine site.

The protein belongs to the methyltransferase superfamily. RNA methyltransferase RsmG family.

It localises to the cytoplasm. It catalyses the reaction guanosine(527) in 16S rRNA + S-adenosyl-L-methionine = N(7)-methylguanosine(527) in 16S rRNA + S-adenosyl-L-homocysteine. Its function is as follows. Specifically methylates the N7 position of guanine in position 527 of 16S rRNA. The polypeptide is Ribosomal RNA small subunit methyltransferase G (Rhodospirillum centenum (strain ATCC 51521 / SW)).